We begin with the raw amino-acid sequence, 336 residues long: Putative cysteine synthase (336 aa).

The residue at position 41 (Lys41) is an N6-(pyridoxal phosphate)lysine. Residues Asn71, Gly179 to Ser183, and Ser269 each bind pyridoxal 5'-phosphate.

It belongs to the cysteine synthase/cystathionine beta-synthase family. Pyridoxal 5'-phosphate serves as cofactor.

The catalysed reaction is O-acetyl-L-serine + hydrogen sulfide = L-cysteine + acetate. In terms of biological role, as it is highly similar to bacterial and plant cysteine synthases, it is possible that it catalyzes a related reaction. In Sinorhizobium fredii (strain NBRC 101917 / NGR234), this protein is Putative cysteine synthase.